The chain runs to 423 residues: MTEFQTLRGMVDLLPMQTQRWQIVENLARHHFHRAGLKEIRTPLLEITELFARGIGEATDVVGKEMYTFLDRGDRSCTLRPEGTASVVRSVVQHGLLNQGPQRLWYGGPMFRYERPQAGRQRQFHQMGVEFFGLPSIHADAELISIAWDLLQDLGLKDLKLELNSLGTFEDRQNYHARLNEWLECNFKLLDKDSQDRIHKNPLRILDTKNQSTQELLKDAPLLTDYLSDLSKERFLCLQEALHKLKIPFDLNHNLVRGLDYYCHTAFEITSSQLGAQATVCGGGRYDRLVKQLGGPDTPSIGWAIGMERLIILLEDSIHKEQFVDVYFINRGELPAIEALSLTRKLRAFNIIVELDHSQANFSKQFKRANRSNAKWAIIMGEDEIAKGEIRLKRLTSSINGDGFDEICFRNSEFNELVHTLKN.

The protein belongs to the class-II aminoacyl-tRNA synthetase family. In terms of assembly, homodimer.

The protein resides in the cytoplasm. The catalysed reaction is tRNA(His) + L-histidine + ATP = L-histidyl-tRNA(His) + AMP + diphosphate + H(+). The polypeptide is Histidine--tRNA ligase (Prochlorococcus marinus (strain MIT 9211)).